A 209-amino-acid chain; its full sequence is High frequency lysogenization protein HflD homolog (209 aa).

This sequence belongs to the HflD family.

The protein localises to the cytoplasm. Its subcellular location is the cell inner membrane. The sequence is that of High frequency lysogenization protein HflD homolog from Proteus mirabilis (strain HI4320).